Consider the following 117-residue polypeptide: Large ribosomal subunit protein bL20 (117 aa).

This sequence belongs to the bacterial ribosomal protein bL20 family.

Binds directly to 23S ribosomal RNA and is necessary for the in vitro assembly process of the 50S ribosomal subunit. It is not involved in the protein synthesizing functions of that subunit. The protein is Large ribosomal subunit protein bL20 of Mesomycoplasma hyopneumoniae (strain 7448) (Mycoplasma hyopneumoniae).